Consider the following 176-residue polypeptide: MTEGWISLGQLGKPFGIKGWLRFNVRDSILTKVKLPVRLKLGKSDPNFPETEIILLEIRPHNGKFVVRFEGIATPEEAEKWVGGILFLPQNLLPKIETKDEFYVRDLIGLQAIDEFGKSLNWKLTDIQDNPAHPILVFSKSEEEEILIPFLHVFVGELNLEKKTIVLIQPELWNEV.

The region spanning 99 to 174 is the PRC barrel domain; the sequence is KDEFYVRDLI…IVLIQPELWN (76 aa).

It belongs to the RimM family. Binds ribosomal protein uS19.

It localises to the cytoplasm. Its function is as follows. An accessory protein needed during the final step in the assembly of 30S ribosomal subunit, possibly for assembly of the head region. Essential for efficient processing of 16S rRNA. May be needed both before and after RbfA during the maturation of 16S rRNA. It has affinity for free ribosomal 30S subunits but not for 70S ribosomes. In Leptospira borgpetersenii serovar Hardjo-bovis (strain JB197), this protein is Ribosome maturation factor RimM.